A 602-amino-acid chain; its full sequence is (R)-limonene synthase (602 aa).

Mg(2+) is bound by residues Asp-356, Asp-360, Asp-500, Thr-504, and Glu-508. The DDXXD motif signature appears at 356 to 360; the sequence is DDVYD.

It belongs to the terpene synthase family. Mg(2+) serves as cofactor. The cofactor is Mn(2+).

The enzyme catalyses (2E)-geranyl diphosphate = (4R)-limonene + diphosphate. Functionally, catalyzes the formation of (R)-(+)-limonene, terpinolene, (1R,5S)-(+)-camphene, (1R,5R)-(+)-alpha-pinene, beta-myrcene and traces of alpha-phellandrene. In Lavandula angustifolia (Lavender), this protein is (R)-limonene synthase.